Here is a 226-residue protein sequence, read N- to C-terminus: Cytochrome c biogenesis ATP-binding export protein CcmA (226 aa).

Positions 19–226 (LRANDLAFSR…LGGAHALPPA (208 aa)) constitute an ABC transporter domain. Position 51–58 (51–58 (GPNGSGKS)) interacts with ATP.

This sequence belongs to the ABC transporter superfamily. CcmA exporter (TC 3.A.1.107) family. In terms of assembly, the complex is composed of two ATP-binding proteins (CcmA) and two transmembrane proteins (CcmB).

The protein localises to the cell inner membrane. It catalyses the reaction heme b(in) + ATP + H2O = heme b(out) + ADP + phosphate + H(+). Its function is as follows. Part of the ABC transporter complex CcmAB involved in the biogenesis of c-type cytochromes; once thought to export heme, this seems not to be the case, but its exact role is uncertain. Responsible for energy coupling to the transport system. The chain is Cytochrome c biogenesis ATP-binding export protein CcmA from Cupriavidus pinatubonensis (strain JMP 134 / LMG 1197) (Cupriavidus necator (strain JMP 134)).